Here is a 212-residue protein sequence, read N- to C-terminus: Ribonuclease HII (212 aa).

The region spanning 1–206 (MARFGVDEAG…SRDALGAAEQ (206 aa)) is the RNase H type-2 domain. Residues D7, E8, and D100 each coordinate a divalent metal cation.

It belongs to the RNase HII family. Mn(2+) serves as cofactor. Requires Mg(2+) as cofactor.

Its subcellular location is the cytoplasm. It carries out the reaction Endonucleolytic cleavage to 5'-phosphomonoester.. Its function is as follows. Endonuclease that specifically degrades the RNA of RNA-DNA hybrids. This chain is Ribonuclease HII, found in Halobacterium salinarum (strain ATCC 29341 / DSM 671 / R1).